The chain runs to 265 residues: Chanoclavine-I dehydrogenase easD (265 aa).

A signal peptide spans 1-20; it reads MSFVSSKIFAITGGASGIGA. Residues I18, D66, R132, Y169, K173, and T205 each contribute to the NADP(+) site. Catalysis depends on Y169, which acts as the Proton donor. The Lowers pKa of active site Tyr role is filled by K173.

Belongs to the short-chain dehydrogenases/reductases (SDR) family. Homotetramer.

It carries out the reaction chanoclavine-I + NAD(+) = chanoclavine-I aldehyde + NADH + H(+). It functions in the pathway alkaloid biosynthesis; ergot alkaloid biosynthesis. Its function is as follows. Chanoclavine-I dehydrogenase; part of the gene cluster that mediates the biosynthesis of fungal ergot alkaloid. DmaW catalyzes the first step of ergot alkaloid biosynthesis by condensing dimethylallyl diphosphate (DMAP) and tryptophan to form 4-dimethylallyl-L-tryptophan. The second step is catalyzed by the methyltransferase easF that methylates 4-dimethylallyl-L-tryptophan in the presence of S-adenosyl-L-methionine, resulting in the formation of 4-dimethylallyl-L-abrine. The catalase easC and the FAD-dependent oxidoreductase easE then transform 4-dimethylallyl-L-abrine to chanoclavine-I which is further oxidized by easD in the presence of NAD(+), resulting in the formation of chanoclavine-I aldehyde. Chanoclavine-I aldehyde is the precursor of ergoamides and ergopeptines in Clavicipitaceae, and clavine-type alcaloids such as fumiclavine in Trichocomaceae. However, the metabolites downstream of chanoclavine-I aldehyde in Arthrodermataceae have not been identified yet. The protein is Chanoclavine-I dehydrogenase easD of Trichophyton verrucosum (strain HKI 0517).